Consider the following 250-residue polypeptide: Phosphate import ATP-binding protein PstB (250 aa).

Residues 4–245 (LTARDLKLSF…PRHELTEKYV (242 aa)) form the ABC transporter domain. 36-43 (GPSGSGKS) lines the ATP pocket.

This sequence belongs to the ABC transporter superfamily. Phosphate importer (TC 3.A.1.7) family. As to quaternary structure, the complex is composed of two ATP-binding proteins (PstB), two transmembrane proteins (PstC and PstA) and a solute-binding protein (PstS).

The protein resides in the cell membrane. The enzyme catalyses phosphate(out) + ATP + H2O = ADP + 2 phosphate(in) + H(+). Its function is as follows. Part of the ABC transporter complex PstSACB involved in phosphate import. Responsible for energy coupling to the transport system. The polypeptide is Phosphate import ATP-binding protein PstB (Pyrobaculum aerophilum (strain ATCC 51768 / DSM 7523 / JCM 9630 / CIP 104966 / NBRC 100827 / IM2)).